Consider the following 284-residue polypeptide: Tropomyosin alpha-1 chain (284 aa).

The segment at 1 to 38 (MDAIKKKMQMLKLDKENALDRAEQAEADKKAAEERSKQ) is disordered. Residues 1 to 284 (MDAIKKKMQM…DHALNDMTSI (284 aa)) are a coiled coil. Residues 12 to 38 (KLDKENALDRAEQAEADKKAAEERSKQ) are compositionally biased toward basic and acidic residues.

It belongs to the tropomyosin family. As to quaternary structure, homodimer. Heterodimer of an alpha (TPM1, TPM3 or TPM4) and a beta (TPM2) chain. Interacts with HRG (via the HRR domain); the interaction contributes to the antiangiogenic properties of the histidine/proline-rich region (HRR) of HRG.

It localises to the cytoplasm. It is found in the cytoskeleton. Binds to actin filaments in muscle and non-muscle cells. Plays a central role, in association with the troponin complex, in the calcium dependent regulation of vertebrate striated muscle contraction. Smooth muscle contraction is regulated by interaction with caldesmon. In non-muscle cells is implicated in stabilizing cytoskeleton actin filaments. The protein is Tropomyosin alpha-1 chain (TPM1) of Coturnix japonica (Japanese quail).